We begin with the raw amino-acid sequence, 307 residues long: Zinc-alpha-2-glycoprotein (307 aa).

An N-terminal signal peptide occupies residues 1–17 (MVPVLLSLPLLLGPAVF). The residue at position 18 (Gln-18) is a Pyrrolidone carboxylic acid. A disulfide bridge links Cys-118 with Cys-181. 3 N-linked (GlcNAc...) asparagine glycosylation sites follow: Asn-123, Asn-190, and Asn-254. In terms of domain architecture, Ig-like C1-type spans 202-287 (PTVTITSRVI…DHRGFSQSLS (86 aa)). The cysteines at positions 220 and 275 are disulfide-linked.

The protein belongs to the MHC class I family. Interacts with PIP.

The protein resides in the secreted. In terms of biological role, stimulates lipid degradation in adipocytes and causes the extensive fat losses associated with some advanced cancers. The sequence is that of Zinc-alpha-2-glycoprotein (Azgp1) from Mus musculus (Mouse).